A 156-amino-acid chain; its full sequence is Endoribonuclease YbeY (156 aa).

Zn(2+)-binding residues include H122, H126, and H132.

Belongs to the endoribonuclease YbeY family. The cofactor is Zn(2+).

The protein resides in the cytoplasm. Functionally, single strand-specific metallo-endoribonuclease involved in late-stage 70S ribosome quality control and in maturation of the 3' terminus of the 16S rRNA. The sequence is that of Endoribonuclease YbeY from Bacillus cytotoxicus (strain DSM 22905 / CIP 110041 / 391-98 / NVH 391-98).